Consider the following 407-residue polypeptide: MKRAFIMVLDSFGIGATEDADRFGDVGSDTLGHIAEACAKGEADNGRKGPLNLPNLTRLGLVKAHEGSTGKIAAGMDGNADVIGAYAWAHELSSGKDTPSGHWEIAGVPVLFDWGYFSDHENSFPQELLDKLVKRANLPGYLGNCHSSGTVILDQLGEEHMKTGKPIFYTSADSVFQIACHEETFGLDKLYELCEIAREELTEGGYNIGRVIARPFIGDKAGNFQRTGNRHDLAVEPPAPTVLQKLVDEKQGHVVSVGKIADIYANCGITKKVKATGLDALFDATLKEMKEAGDKTIVFTNFVDFDSSWGHRRDIAGYAAGLELFDRRLPELMELVGEDDILILTADHGCDPSWTGTDHTREHIPVLIYGPKVKPGSLGHRETFADIGQTLATYFGTSPMDYGKNML.

Mn(2+) contacts are provided by Asp-10, Asp-306, His-311, Asp-347, His-348, and His-359.

This sequence belongs to the phosphopentomutase family. Mn(2+) serves as cofactor.

The protein resides in the cytoplasm. The catalysed reaction is 2-deoxy-alpha-D-ribose 1-phosphate = 2-deoxy-D-ribose 5-phosphate. It catalyses the reaction alpha-D-ribose 1-phosphate = D-ribose 5-phosphate. Its pathway is carbohydrate degradation; 2-deoxy-D-ribose 1-phosphate degradation; D-glyceraldehyde 3-phosphate and acetaldehyde from 2-deoxy-alpha-D-ribose 1-phosphate: step 1/2. In terms of biological role, isomerase that catalyzes the conversion of deoxy-ribose 1-phosphate (dRib-1-P) and ribose 1-phosphate (Rib-1-P) to deoxy-ribose 5-phosphate (dRib-5-P) and ribose 5-phosphate (Rib-5-P), respectively. This is Phosphopentomutase from Salmonella schwarzengrund (strain CVM19633).